Consider the following 289-residue polypeptide: Polyamine aminopropyltransferase (289 aa).

Residues 5–245 (PGPITLIEPL…YAVNFILGSL (241 aa)) form the PABS domain. Gln-36 contributes to the S-methyl-5'-thioadenosine binding site. The spermidine site is built by His-67 and Glu-91. Residues Asp-111 and 143 to 144 (DG) each bind S-methyl-5'-thioadenosine. Asp-164 (proton acceptor) is an active-site residue.

It belongs to the spermidine/spermine synthase family. Homodimer or homotetramer.

Its subcellular location is the cytoplasm. The enzyme catalyses S-adenosyl 3-(methylsulfanyl)propylamine + putrescine = S-methyl-5'-thioadenosine + spermidine + H(+). It participates in amine and polyamine biosynthesis; spermidine biosynthesis; spermidine from putrescine: step 1/1. Its function is as follows. Catalyzes the irreversible transfer of a propylamine group from the amino donor S-adenosylmethioninamine (decarboxy-AdoMet) to putrescine (1,4-diaminobutane) to yield spermidine. This chain is Polyamine aminopropyltransferase, found in Pyrobaculum calidifontis (strain DSM 21063 / JCM 11548 / VA1).